The primary structure comprises 340 residues: Beta-D-galactofuranosidase xynD (340 aa).

An N-terminal signal peptide occupies residues 1–24 (MKHHNYYPSTCLSILPFLLPLTMS). The Proton acceptor role is filled by Asp-51. Residues Asn-96 and Asn-165 are each glycosylated (N-linked (GlcNAc...) asparagine). Glu-222 serves as the catalytic Proton donor. Asn-302 and Asn-328 each carry an N-linked (GlcNAc...) asparagine glycan.

Belongs to the glycosyl hydrolase 43 family.

Its subcellular location is the secreted. It participates in glycan degradation. Functionally, glycoside hydrolase family 43 beta-D-galactofuranosidase involved in the degradation of beta-galactofuranoside (Galf)-containing glycans such as galactomannan or O-glycans. Is not active on beta-1,5- or beta-1,6-linked beta-D-galactofuranose (Galf) residues. The chain is Beta-D-galactofuranosidase xynD from Aspergillus niger (strain ATCC MYA-4892 / CBS 513.88 / FGSC A1513).